Here is a 148-residue protein sequence, read N- to C-terminus: Probable calcium-binding protein CML14 (148 aa).

3 EF-hand domains span residues 9–44 (DQVS…LGGN), 80–115 (PFDR…IGEK), and 116–148 (LQPS…MVAK). Residues aspartate 22, aspartate 24, aspartate 26, lysine 28, and glutamate 33 each contribute to the Ca(2+) site.

Its function is as follows. Potential calcium sensor. The sequence is that of Probable calcium-binding protein CML14 (CML14) from Arabidopsis thaliana (Mouse-ear cress).